Here is a 435-residue protein sequence, read N- to C-terminus: Homoserine dehydrogenase (435 aa).

Positions 13, 14, 43, and 105 each coordinate NADPH. NAD(+) is bound at residue valine 14. 3 residues coordinate NADP(+): valine 14, arginine 43, and lysine 105. Residues glutamate 129, valine 132, glycine 134, and isoleucine 136 each coordinate Na(+). The active-site Proton donor is the lysine 204. 2 disordered regions span residues 255-274 (ARGV…TPDR) and 377-402 (RCDD…PDHV). Composition is skewed to basic and acidic residues over residues 262-274 (RAPD…TPDR) and 377-391 (RCDD…AERR).

It belongs to the homoserine dehydrogenase family. It depends on a metal cation as a cofactor.

The catalysed reaction is L-homoserine + NADP(+) = L-aspartate 4-semialdehyde + NADPH + H(+). It catalyses the reaction L-homoserine + NAD(+) = L-aspartate 4-semialdehyde + NADH + H(+). The protein operates within amino-acid biosynthesis; L-methionine biosynthesis via de novo pathway; L-homoserine from L-aspartate: step 3/3. Its pathway is amino-acid biosynthesis; L-threonine biosynthesis; L-threonine from L-aspartate: step 3/5. Catalyzes the conversion of L-aspartate-beta-semialdehyde (L-Asa) to L-homoserine (L-Hse), the third step in the biosynthesis of threonine and methionine from aspartate. The polypeptide is Homoserine dehydrogenase (hom) (Methylobacillus glycogenes).